The sequence spans 195 residues: Nascent polypeptide-associated complex subunit alpha (195 aa).

Disordered stretches follow at residues 1–59 (MTGS…SRSE) and 132–153 (TREA…EEDS). Residues 7–16 (TRQKEVKEPQ) show a composition bias toward basic and acidic residues. The segment covering 19–33 (VSDDSDNEAVEQELT) has biased composition (acidic residues). A compositionally biased stretch (basic and acidic residues) spans 47 to 59 (DHIDKQAKQSRSE). Residues 56–121 (SRSEKKARKL…AKIEDLTQHA (66 aa)) form the NAC-A/B domain. Residues 142–153 (EEDENEDVEEDS) are compositionally biased toward acidic residues.

It belongs to the NAC-alpha family. As to quaternary structure, may be part of the nascent polypeptide-associated complex (NAC), which is a heterodimer of icd-2 and icd-1 (via NAC-A/B domains).

It is found in the cytoplasm. Functionally, may prevent inappropriate targeting of non-secretory polypeptides to the endoplasmic reticulum (ER). Plays a role in the response to heat stress. The polypeptide is Nascent polypeptide-associated complex subunit alpha (Caenorhabditis elegans).